A 117-amino-acid polypeptide reads, in one-letter code: Toxin CSTX-8 (117 aa).

A signal peptide spans 1-20 (MKVLVICAVLFLAIFSNSSA). Residues 21–47 (ETEDDFLEDESFQADDVIPFLASEQVR) constitute a propeptide that is removed on maturation. 4 disulfide bridges follow: cysteine 50/cysteine 65, cysteine 57/cysteine 74, cysteine 64/cysteine 95, and cysteine 76/cysteine 93. Residues 82–87 (RSETDR) constitute a propeptide that is removed on maturation. Threonine 116 bears the Threonine amide mark.

It belongs to the neurotoxin 19 (CSTX) family. 12 subfamily. As to quaternary structure, heterodimer of A and B chains; disulfide-linked. Interacts with CSTX-1 (AC P81694), and with CSTX-9 (AC P58604). Expressed by the venom gland.

It is found in the secreted. Its subcellular location is the target cell membrane. In terms of biological role, synergistic toxin that induces or increases a cytolytic effect when combined with CSTX-1 (AC P81694) or CSTX-9 (AC P58604). When alone, has a weak insecticidal activity, with an unknown molecular target. This is Toxin CSTX-8 from Cupiennius salei (American wandering spider).